The following is a 748-amino-acid chain: Catalase-peroxidase (748 aa).

Polar residues predominate over residues 1–16 (MSSDTSASRPPQPDTR). The tract at residues 1 to 43 (MSSDTSASRPPQPDTRTASKSESENPAIPSPHPKSNAPLTNRD) is disordered. The segment at residues 113–238 (WHAAGTYRIH…YGATTMGLIY (126 aa)) is a cross-link (tryptophyl-tyrosyl-methioninium (Trp-Tyr) (with M-264)). His114 functions as the Proton acceptor in the catalytic mechanism. The tryptophyl-tyrosyl-methioninium (Tyr-Met) (with W-113) cross-link spans 238–264 (YVNPEGPEGKPDPIAAAIDIRETFGRM). A heme b-binding site is contributed by His279.

This sequence belongs to the peroxidase family. Peroxidase/catalase subfamily. As to quaternary structure, homodimer or homotetramer. Requires heme b as cofactor. In terms of processing, formation of the three residue Trp-Tyr-Met cross-link is important for the catalase, but not the peroxidase activity of the enzyme.

It carries out the reaction H2O2 + AH2 = A + 2 H2O. The enzyme catalyses 2 H2O2 = O2 + 2 H2O. In terms of biological role, bifunctional enzyme with both catalase and broad-spectrum peroxidase activity. This Mycolicibacterium paratuberculosis (strain ATCC BAA-968 / K-10) (Mycobacterium paratuberculosis) protein is Catalase-peroxidase.